The sequence spans 369 residues: Histidine decarboxylase (369 aa).

His119 lines the substrate pocket. The residue at position 230 (Lys230) is an N6-(pyridoxal phosphate)lysine.

It belongs to the group II decarboxylase family. As to quaternary structure, homotetramer. Requires pyridoxal 5'-phosphate as cofactor.

The catalysed reaction is L-histidine + H(+) = histamine + CO2. The chain is Histidine decarboxylase from Mesorhizobium japonicum (strain LMG 29417 / CECT 9101 / MAFF 303099) (Mesorhizobium loti (strain MAFF 303099)).